Reading from the N-terminus, the 309-residue chain is Ribosomal RNA small subunit methyltransferase H (309 aa).

Residues Ala36–His38, Asp55, Phe81, Asp102, and Gln109 each bind S-adenosyl-L-methionine.

The protein belongs to the methyltransferase superfamily. RsmH family.

The protein localises to the cytoplasm. The enzyme catalyses cytidine(1402) in 16S rRNA + S-adenosyl-L-methionine = N(4)-methylcytidine(1402) in 16S rRNA + S-adenosyl-L-homocysteine + H(+). In terms of biological role, specifically methylates the N4 position of cytidine in position 1402 (C1402) of 16S rRNA. The polypeptide is Ribosomal RNA small subunit methyltransferase H (Mycoplasma genitalium (strain ATCC 33530 / DSM 19775 / NCTC 10195 / G37) (Mycoplasmoides genitalium)).